Here is a 611-residue protein sequence, read N- to C-terminus: MPPVDPHSYTDGDHPVTAKAALAFYLDFAASTIHASALLTLSAPHSGDLLLDTRALAVHSASTASGPPSPIPFSLADAADPVLGSALTLTLPPDTTSFLLTFSTSPSASALQWLSPPQTASSLPFVFSQCQSIHARSVFPCHDTPAARITFDLLLNVPTQLSAVAAARHVSRRDPLPSDHRGACDDALWCAPGRIVEEFQMEQSVPPYLFAFAAGGIGFRDLGPRTRVYAEGGDKVLDEAAREFAGVEEMVKVGESLFGPYEWERFDLLVLPPSFPYGGMENPRMVFLTPTVIKGDAAGAQVVAHELAHSWTGNLITNKTNEDFWLNEGFTTYAERRIVEVVQGEERAALNMGIGWRGLNRMMERFKDNMEYTKLKPKMAGIDPDDVYSEVPYEKGFQFLWRIERQIGRPAFDEFLKNYISTFKFKSIDTETFLEFLKTNVPGIENQIDLQLWIEGTGIPPDAMEPESAIYKKICSLAAEFKSGKLPSEDEVADWSGQEWELYLENLPTDVEASQVTALDERYKLSESCDYEVKVAFLQLAIPTGCRCYFNEVEKCLKQVGRMKYLRPLYSSLARCSGEEKMLAHRIFSEAHEFYHPIARSVAESILSKHG.

Substrate-binding positions include 129-131 (QCQ) and 278-282 (GGMEN). Histidine 305 is a binding site for Zn(2+). Residue glutamate 306 is the Proton acceptor of the active site. 2 residues coordinate Zn(2+): histidine 309 and glutamate 328. The active-site Proton donor is tyrosine 393. Residue 562–564 (RMK) coordinates substrate.

This sequence belongs to the peptidase M1 family. It depends on Zn(2+) as a cofactor.

It localises to the cytoplasm. It carries out the reaction an epoxide + H2O = an ethanediol. In terms of biological role, aminopeptidase that preferentially cleaves di- and tripeptides. Also has low epoxide hydrolase activity (in vitro). Can hydrolyze the epoxide leukotriene LTA(4) but it forms preferentially 5,6-dihydroxy-7,9,11,14-eicosatetraenoic acid rather than the cytokine leukotriene B(4) as the product compared to the homologous mammalian enzyme (in vitro). The polypeptide is Leucine aminopeptidase (LKHA4) (Oryza sativa subsp. japonica (Rice)).